Consider the following 95-residue polypeptide: Acylphosphatase (95 aa).

One can recognise an Acylphosphatase-like domain in the interval 8-95 (RAKILVRGKV…GNFRTFEIKK (88 aa)). Catalysis depends on residues Arg-23 and Asn-41.

The protein belongs to the acylphosphatase family.

The enzyme catalyses an acyl phosphate + H2O = a carboxylate + phosphate + H(+). This Leptospira interrogans serogroup Icterohaemorrhagiae serovar copenhageni (strain Fiocruz L1-130) protein is Acylphosphatase (acyP).